Reading from the N-terminus, the 120-residue chain is Large ribosomal subunit protein uL14 (120 aa).

Belongs to the universal ribosomal protein uL14 family. Part of the 50S ribosomal subunit. Forms a cluster with proteins L3 and L19. In the 70S ribosome, L14 and L19 interact and together make contacts with the 16S rRNA in bridges B5 and B8.

Its function is as follows. Binds to 23S rRNA. Forms part of two intersubunit bridges in the 70S ribosome. The chain is Large ribosomal subunit protein uL14 from Phytoplasma australiense.